We begin with the raw amino-acid sequence, 235 residues long: KNMITGAAQMDGAILVVSAADGPMPQTREHILLAKQVGVPNIVVFLNKQDQVDDEELLELVELEVRELLGQYGFPGDNIPFVAGSALRALENITQNNTIQRGENEWVDKIHSLMDAVDEYIPTPVRDVEKTFLMAVEDVFSITGRGTVTTGRIERGIIKVGDTIEIVGLRETTTTTITGLEMFQKTLDEGMAGDNIGILLRGVQKKDIERGMVLAQPGTITPHTQFEAEVYVLTK.

The tr-type G domain maps to 1 to 125 (KNMITGAAQM…AVDEYIPTPV (125 aa)). Residue 47-50 (NKQD) coordinates GTP.

Belongs to the TRAFAC class translation factor GTPase superfamily. Classic translation factor GTPase family. EF-Tu/EF-1A subfamily.

It localises to the plastid. The protein resides in the chloroplast. The catalysed reaction is GTP + H2O = GDP + phosphate + H(+). GTP hydrolase that promotes the GTP-dependent binding of aminoacyl-tRNA to the A-site of ribosomes during protein biosynthesis. The protein is Elongation factor Tu, chloroplastic (tufA) of Gracilariopsis lemaneiformis (Red alga).